We begin with the raw amino-acid sequence, 239 residues long: Pyridoxine 5'-phosphate synthase (239 aa).

Residue Asn-7 coordinates 3-amino-2-oxopropyl phosphate. A 1-deoxy-D-xylulose 5-phosphate-binding site is contributed by 9 to 10 (DH). Arg-18 lines the 3-amino-2-oxopropyl phosphate pocket. His-43 acts as the Proton acceptor in catalysis. The 1-deoxy-D-xylulose 5-phosphate site is built by Arg-45 and His-50. Glu-70 functions as the Proton acceptor in the catalytic mechanism. Thr-100 is a binding site for 1-deoxy-D-xylulose 5-phosphate. His-191 acts as the Proton donor in catalysis. 3-amino-2-oxopropyl phosphate-binding positions include Gly-192 and 213–214 (GH).

It belongs to the PNP synthase family. In terms of assembly, homooctamer; tetramer of dimers.

It is found in the cytoplasm. It carries out the reaction 3-amino-2-oxopropyl phosphate + 1-deoxy-D-xylulose 5-phosphate = pyridoxine 5'-phosphate + phosphate + 2 H2O + H(+). It participates in cofactor biosynthesis; pyridoxine 5'-phosphate biosynthesis; pyridoxine 5'-phosphate from D-erythrose 4-phosphate: step 5/5. Functionally, catalyzes the complicated ring closure reaction between the two acyclic compounds 1-deoxy-D-xylulose-5-phosphate (DXP) and 3-amino-2-oxopropyl phosphate (1-amino-acetone-3-phosphate or AAP) to form pyridoxine 5'-phosphate (PNP) and inorganic phosphate. The protein is Pyridoxine 5'-phosphate synthase of Synechococcus sp. (strain JA-2-3B'a(2-13)) (Cyanobacteria bacterium Yellowstone B-Prime).